Here is a 174-residue protein sequence, read N- to C-terminus: Protein RESTRICTED TEV MOVEMENT 1 (174 aa).

Positions 1–152 (MKIGPVGKHD…LQYIGVYLRP (152 aa)) constitute a Jacalin-type lectin domain.

This sequence belongs to the jacalin lectin family. As to quaternary structure, self-interacts. Interacts with RTM3. Expressed at low levels exclusively in phloem-associated cells (e.g. sieve elements and adjacent cells).

It is found in the cytoplasm. Its function is as follows. Required for the restriction of long-distance movement of the pathogenic tobacco etch virus (TEV) without causing a hypersensitive response or inducing systemic acquired resistance. The sequence is that of Protein RESTRICTED TEV MOVEMENT 1 (RTM1) from Arabidopsis thaliana (Mouse-ear cress).